Consider the following 378-residue polypeptide: Protein RecA (378 aa).

79-86 (GPESSGKT) provides a ligand contact to ATP.

Belongs to the RecA family.

It localises to the cytoplasm. In terms of biological role, can catalyze the hydrolysis of ATP in the presence of single-stranded DNA, the ATP-dependent uptake of single-stranded DNA by duplex DNA, and the ATP-dependent hybridization of homologous single-stranded DNAs. It interacts with LexA causing its activation and leading to its autocatalytic cleavage. This Streptococcus pyogenes serotype M12 (strain MGAS2096) protein is Protein RecA.